We begin with the raw amino-acid sequence, 86 residues long: Teretoxin Tsu6.16 (86 aa).

The signal sequence occupies residues 1 to 21; it reads MATSGRLLCVCLVMGLVFESL. Residues 22–46 constitute a propeptide that is removed on maturation; that stretch reads GYLTGREKRPAENLEASVQRRWYLN.

Belongs to the teretoxin M (TM) superfamily. In terms of processing, contains 3 disulfide bonds. In terms of tissue distribution, expressed by the venom duct.

It localises to the secreted. This Terebra subulata (Chocolate spotted auger) protein is Teretoxin Tsu6.16.